The chain runs to 215 residues: Elongation factor Ts (215 aa).

The segment at 80–83 is involved in Mg(2+) ion dislocation from EF-Tu; sequence TDFV.

Belongs to the EF-Ts family.

The protein localises to the cytoplasm. Associates with the EF-Tu.GDP complex and induces the exchange of GDP to GTP. It remains bound to the aminoacyl-tRNA.EF-Tu.GTP complex up to the GTP hydrolysis stage on the ribosome. The chain is Elongation factor Ts from Alkaliphilus metalliredigens (strain QYMF).